The chain runs to 337 residues: B1 bradykinin receptor (337 aa).

At 1 to 41 (MASEVLLELQPSNRSLQAPANITSCESALEDWDLLYRVLPG) the chain is on the extracellular side. N13 and N21 each carry an N-linked (GlcNAc...) asparagine glycan. The chain crosses the membrane as a helical span at residues 42 to 62 (FVITICFFGLLGNLLVLSFFL). At 63–83 (LPWRQWWWQQRQRQQRLTIAE) the chain is on the cytoplasmic side. A helical membrane pass occupies residues 84–104 (IYLANLAASDLVFVLGLPFWA). At 105–121 (ENIGNRFNWPFGTDLCR) the chain is on the extracellular side. A disulfide bond links C120 and C199. A helical transmembrane segment spans residues 122 to 142 (VVSGVIKANLFVSIFLVVAIS). The Cytoplasmic portion of the chain corresponds to 143–164 (QDRYRLLVYPMTSWGYRRRRQA). A helical membrane pass occupies residues 165–185 (QATCLLIWVAGGLLSIPTFLL). Residues 186–217 (RSVKVVPDLNVSACILLFPHEAWHFARMVELN) lie on the Extracellular side of the membrane. N195 is a glycosylation site (N-linked (GlcNAc...) asparagine). Residues 218–238 (VLGFLLPVTAIIFFNYHILAS) form a helical membrane-spanning segment. The Cytoplasmic portion of the chain corresponds to 239–261 (LRGQKEASRTRCGGPKGSKTTGL). A helical transmembrane segment spans residues 262 to 282 (ILTLVASFLVCWCPYHFFAFL). The Extracellular portion of the chain corresponds to 283–305 (DFLVQVRVIQDCSWKEITDLGLQ). Residues 306 to 326 (LANFFAFVNSCLNPLIYVFAG) traverse the membrane as a helical segment. The Cytoplasmic portion of the chain corresponds to 327–337 (RLLKTRVLGTL).

This sequence belongs to the G-protein coupled receptor 1 family. Bradykinin receptor subfamily. BDKRB1 sub-subfamily. Expressed in bladder, lung, duodenum, kidney, uterus, thymus, salivary gland, testis, prostate, macrophages, aorta, spleen and heart.

Its subcellular location is the cell membrane. Functionally, this is a receptor for bradykinin. Could be a factor in chronic pain and inflammation. The protein is B1 bradykinin receptor (Bdkrb1) of Rattus norvegicus (Rat).